Consider the following 354-residue polypeptide: Chorismate synthase (354 aa).

Arg48 contacts NADP(+). FMN-binding positions include 125–127 (RAS), Gly277, 292–296 (KPIPS), and Arg318.

The protein belongs to the chorismate synthase family. As to quaternary structure, homotetramer. The cofactor is FMNH2.

It catalyses the reaction 5-O-(1-carboxyvinyl)-3-phosphoshikimate = chorismate + phosphate. It functions in the pathway metabolic intermediate biosynthesis; chorismate biosynthesis; chorismate from D-erythrose 4-phosphate and phosphoenolpyruvate: step 7/7. Functionally, catalyzes the anti-1,4-elimination of the C-3 phosphate and the C-6 proR hydrogen from 5-enolpyruvylshikimate-3-phosphate (EPSP) to yield chorismate, which is the branch point compound that serves as the starting substrate for the three terminal pathways of aromatic amino acid biosynthesis. This reaction introduces a second double bond into the aromatic ring system. The sequence is that of Chorismate synthase from Nitratidesulfovibrio vulgaris (strain ATCC 29579 / DSM 644 / CCUG 34227 / NCIMB 8303 / VKM B-1760 / Hildenborough) (Desulfovibrio vulgaris).